The sequence spans 205 residues: Small ribosomal subunit protein uS4 (205 aa).

Residues 95 to 163 enclose the S4 RNA-binding domain; it reads RRLDNVVYRL…FKENLESRDP (69 aa).

The protein belongs to the universal ribosomal protein uS4 family. As to quaternary structure, part of the 30S ribosomal subunit. Contacts protein S5. The interaction surface between S4 and S5 is involved in control of translational fidelity.

One of the primary rRNA binding proteins, it binds directly to 16S rRNA where it nucleates assembly of the body of the 30S subunit. Functionally, with S5 and S12 plays an important role in translational accuracy. This chain is Small ribosomal subunit protein uS4, found in Persephonella marina (strain DSM 14350 / EX-H1).